The following is an 84-amino-acid chain: Magnetosome protein MamR (84 aa).

It belongs to the magnetosome MamR family.

The protein localises to the magnetosome. May play a role in controlling magnetite number and size. Coexpression of mamLQRBIEMO in a deletion of the 17 gene mamAB operon restores magnetosome vesicle formation but not magnetite biosynthesis. This is Magnetosome protein MamR from Magnetospirillum gryphiswaldense (strain DSM 6361 / JCM 21280 / NBRC 15271 / MSR-1).